A 266-amino-acid polypeptide reads, in one-letter code: Interleukin-1 beta (266 aa).

Residues 1 to 114 (MAAVPELTSE…KTDADNFMSD (114 aa)) constitute a propeptide that is removed on maturation.

The protein belongs to the IL-1 family. As to quaternary structure, monomer. In its precursor form, weakly interacts with full-length MEFV; the mature cytokine does not interact at all. Interacts with integrins ITGAV:ITGBV and ITGA5:ITGB1; integrin-binding is required for IL1B signaling. Interacts with cargo receptor TMED10; the interaction is direct and is required for the secretion of IL1B mature form. Interacts with HSP90AB1; the interaction facilitates cargo translocation into the ERGIC. Interacts with HSP90B1; the interaction facilitates cargo translocation into the ERGIC.

It localises to the cytoplasm. Its subcellular location is the cytosol. The protein localises to the secreted. It is found in the lysosome. The protein resides in the extracellular exosome. Potent pro-inflammatory cytokine. Initially discovered as the major endogenous pyrogen, induces prostaglandin synthesis, neutrophil influx and activation, T-cell activation and cytokine production, B-cell activation and antibody production, and fibroblast proliferation and collagen production. Promotes Th17 differentiation of T-cells. Synergizes with IL12/interleukin-12 to induce IFNG synthesis from T-helper 1 (Th1) cells. Plays a role in angiogenesis by inducing VEGF production synergistically with TNF and IL6. Involved in transduction of inflammation downstream of pyroptosis: its mature form is specifically released in the extracellular milieu by passing through the gasdermin-D (GSDMD) pore. This Canis lupus familiaris (Dog) protein is Interleukin-1 beta (IL1B).